A 347-amino-acid polypeptide reads, in one-letter code: Leukocyte cell-derived chemotaxin 1 (347 aa).

The disordered stretch occupies residues Met1–Ala29. A helical transmembrane segment spans residues Val45–Lys65. Positions Gly103–Leu200 constitute a BRICHOS domain. A disulfide bridge connects residues Cys130 and Cys192. A disordered region spans residues Lys208 to Glu281. A propeptide spanning residues Arg210–Arg213 is cleaved from the precursor. Residues Thr240 to Asn276 are compositionally biased toward polar residues. Asn256 is a glycosylation site (N-linked (GlcNAc...) asparagine). 4 disulfides stabilise this stretch: Cys295/Cys299, Cys296/Cys336, Cys306/Cys330, and Cys310/Cys326.

The protein belongs to the chondromodulin-1 family. Post-translationally, after cleavage, the post-translationally modified ChM-I is secreted as a glycoprotein. In terms of tissue distribution, expressed in the cartilage and in fetal precartilaginous tissues as well as in heart and eye.

The protein resides in the secreted. It localises to the extracellular space. The protein localises to the extracellular matrix. Its subcellular location is the endomembrane system. Its function is as follows. Bifunctional growth regulator. May contribute to the rapid growth of cartilage and vascular invasion prior to the replacement of cartilage by bone during endochondral bone development. Plays a role as antiangiogenic factor in cardiac valves to suppress neovascularization. This is Leukocyte cell-derived chemotaxin 1 from Gallus gallus (Chicken).